The chain runs to 219 residues: Biofilm-associated metzincin protease inhibitor (219 aa).

The helical transmembrane segment at 4-24 (TWIYAASAAAIGGALIGGWLL) threads the bilayer. Basic and acidic residues predominate over residues 191–204 (DIAARSDPHGDHVD). Residues 191 to 219 (DIAARSDPHGDHVDAPLAELPPMPPPAQG) are disordered. Residues 209–219 (ELPPMPPPAQG) show a composition bias toward pro residues.

The protein localises to the cell membrane. In terms of biological role, inhibitor of the metalloendopeptidase Mep72. Forms a protein-protein complex with the protease, which is the product of its coregulated adjacent gene, and probably prevents premature protease activity until the protein has been secreted. This Pseudomonas aeruginosa (strain ATCC 15692 / DSM 22644 / CIP 104116 / JCM 14847 / LMG 12228 / 1C / PRS 101 / PAO1) protein is Biofilm-associated metzincin protease inhibitor.